Reading from the N-terminus, the 110-residue chain is Evasin P1166 (110 aa).

The first 24 residues, 1-24 (MEVKIFTLLQIALFIALGIHLVVA), serve as a signal peptide directing secretion. 3 cysteine pairs are disulfide-bonded: C45-C67, C49-C69, and C60-C80. N-linked (GlcNAc...) asparagine glycosylation is present at N48. Residues 89 to 110 (SEYPNPKSSEIDAAAPLPRETH) are disordered.

It localises to the secreted. In terms of biological role, salivary chemokine-binding protein which binds to host chemokines CXCL1, CXCL2 and CXCL8. The polypeptide is Evasin P1166 (Ixodes ricinus (Common tick)).